The sequence spans 509 residues: Cytochrome P450 monooxygenase AFT11-1 (509 aa).

A heme-binding site is contributed by Cys432.

The protein belongs to the cytochrome P450 family. It depends on heme as a cofactor.

It functions in the pathway mycotoxin biosynthesis. Its function is as follows. Cytochrome P450 monooxygenase; part of the gene clusters that mediate the biosynthesis of the host-selective toxins (HSTs) AF-toxins responsible for Alternaria black spot of strawberry disease by the strawberry pathotype. AF-toxin I and III are valine derivatives of 2,3-dyhydroxy-isovaleric acid and 2-hydroxy-isovaleric acid respectively, while AF II is an isoleucine derivative of 2-hydroxy-valeric acid. These derivatives are bound to a 9,10-epoxy-8-hydroxy-9-methyl-decatrienoic acid (EDA) moiety. On cellular level, AF-toxins affect plasma membrane of susceptible cells and cause a sudden increase in loss of K(+) after a few minutes of toxin treatment. The aldo-keto reductase AFTS1 catalyzes the conversion of 2-keto-isovaleric acid (2-KIV) to 2-hydroxy-isovaleric acid (2-HIV) by reduction of its ketone to an alcohol. The acyl-CoA ligase AFT1, the hydrolase AFT2 and the enoyl-CoA hydratases AFT3 and AFT6, but also the polyketide synthase AFT9, the acyl-CoA dehydrogenase AFT10, the cytochrome P450 monooxygenase AFT11 and the oxidoreductase AFT12 are all involved in the biosynthesis of the AK-, AF- and ACT-toxin common EDA structural moiety. The exact function of each enzyme, and of additional enzymes identified within the AF-toxin clusters have still to be determined. The protein is Cytochrome P450 monooxygenase AFT11-1 of Alternaria alternata (Alternaria rot fungus).